The following is a 200-amino-acid chain: NAD(P)H dehydrogenase (quinone) (200 aa).

The Flavodoxin-like domain occupies 4–191 (VLVLYYSSYG…GGARYQGALV (188 aa)). FMN contacts are provided by residues 10–15 (SSYGHI) and 79–81 (TRF). Tyr-12 is an NAD(+) binding site. Residue Trp-99 coordinates substrate. FMN is bound by residues 114 to 120 (STASQHG) and His-135.

It belongs to the WrbA family. It depends on FMN as a cofactor.

The enzyme catalyses a quinone + NADH + H(+) = a quinol + NAD(+). The catalysed reaction is a quinone + NADPH + H(+) = a quinol + NADP(+). The chain is NAD(P)H dehydrogenase (quinone) from Rhodospirillum centenum (strain ATCC 51521 / SW).